We begin with the raw amino-acid sequence, 102 residues long: Aspartyl/glutamyl-tRNA(Asn/Gln) amidotransferase subunit C (102 aa).

The protein belongs to the GatC family. In terms of assembly, heterotrimer of A, B and C subunits.

It catalyses the reaction L-glutamyl-tRNA(Gln) + L-glutamine + ATP + H2O = L-glutaminyl-tRNA(Gln) + L-glutamate + ADP + phosphate + H(+). The catalysed reaction is L-aspartyl-tRNA(Asn) + L-glutamine + ATP + H2O = L-asparaginyl-tRNA(Asn) + L-glutamate + ADP + phosphate + 2 H(+). Allows the formation of correctly charged Asn-tRNA(Asn) or Gln-tRNA(Gln) through the transamidation of misacylated Asp-tRNA(Asn) or Glu-tRNA(Gln) in organisms which lack either or both of asparaginyl-tRNA or glutaminyl-tRNA synthetases. The reaction takes place in the presence of glutamine and ATP through an activated phospho-Asp-tRNA(Asn) or phospho-Glu-tRNA(Gln). In Bordetella petrii (strain ATCC BAA-461 / DSM 12804 / CCUG 43448), this protein is Aspartyl/glutamyl-tRNA(Asn/Gln) amidotransferase subunit C.